A 231-amino-acid polypeptide reads, in one-letter code: Large ribosomal subunit protein uL1 (231 aa).

This sequence belongs to the universal ribosomal protein uL1 family. In terms of assembly, part of the 50S ribosomal subunit.

Binds directly to 23S rRNA. The L1 stalk is quite mobile in the ribosome, and is involved in E site tRNA release. Its function is as follows. Protein L1 is also a translational repressor protein, it controls the translation of the L11 operon by binding to its mRNA. The chain is Large ribosomal subunit protein uL1 from Ectopseudomonas mendocina (strain ymp) (Pseudomonas mendocina).